Reading from the N-terminus, the 270-residue chain is Large ribosomal subunit protein uL30 (270 aa).

Methionine 1 bears the N-acetylmethionine mark. 6 consecutive repeat copies span residues lysine 7 to leucine 18, lysine 19 to leucine 29, lysine 30 to leucine 40, lysine 41 to valine 52, lysine 53 to leucine 64, and arginine 65 to alanine 76. Positions lysine 7–alanine 76 are 6 X 12 AA tandem repeats. Threonine 39 carries the post-translational modification Phosphothreonine. Lysine 146 carries the N6-acetyllysine modification. Position 149 is an N6-succinyllysine (lysine 149). Tyrosine 161 bears the Phosphotyrosine mark.

This sequence belongs to the universal ribosomal protein uL30 family. Component of the large ribosomal subunit. Homodimer. Interacts with DHX33.

It is found in the cytoplasm. Functionally, component of the large ribosomal subunit. The ribosome is a large ribonucleoprotein complex responsible for the synthesis of proteins in the cell. Binds to G-rich structures in 28S rRNA and in mRNAs. Plays a regulatory role in the translation apparatus; inhibits cell-free translation of mRNAs. This chain is Large ribosomal subunit protein uL30 (Rpl7), found in Mus musculus (Mouse).